The primary structure comprises 299 residues: Delta-9 desaturase-like 5 protein (299 aa).

A run of 2 helical transmembrane segments spans residues 31–51 (ADII…LAPF) and 55–75 (WEAL…ITFS). The short motif at 77 to 82 (HRNLAH) is the Histidine box-1 element. Residues 114–118 (HRFHH) carry the Histidine box-2 motif. The next 2 helical transmembrane spans lie at 174 to 194 (IGFH…LPYL) and 199 to 219 (GVGG…CHIW). Residues 246-250 (HNNHH) carry the Histidine box-3 motif.

The protein belongs to the fatty acid desaturase type 1 family. Fe cation is required as a cofactor.

It localises to the endoplasmic reticulum membrane. It functions in the pathway lipid metabolism; polyunsaturated fatty acid biosynthesis. The polypeptide is Delta-9 desaturase-like 5 protein (Arabidopsis thaliana (Mouse-ear cress)).